Consider the following 241-residue polypeptide: Geranylgeranylglyceryl phosphate synthase (241 aa).

Asp-26 and Ser-52 together coordinate Mg(2+). Sn-glycerol 1-phosphate is bound by residues Tyr-172–Gly-178, Gly-204–Gly-205, and Gly-226–Thr-227.

Belongs to the GGGP/HepGP synthase family. Group II subfamily. The cofactor is Mg(2+).

Its subcellular location is the cytoplasm. It catalyses the reaction sn-glycerol 1-phosphate + (2E,6E,10E)-geranylgeranyl diphosphate = sn-3-O-(geranylgeranyl)glycerol 1-phosphate + diphosphate. The protein operates within membrane lipid metabolism; glycerophospholipid metabolism. Prenyltransferase that catalyzes the transfer of the geranylgeranyl moiety of geranylgeranyl diphosphate (GGPP) to the C3 hydroxyl of sn-glycerol-1-phosphate (G1P). This reaction is the first ether-bond-formation step in the biosynthesis of archaeal membrane lipids. This Hyperthermus butylicus (strain DSM 5456 / JCM 9403 / PLM1-5) protein is Geranylgeranylglyceryl phosphate synthase.